The following is a 749-amino-acid chain: Catalase-peroxidase 2 (749 aa).

A signal peptide spans Met1–Ala27. The tryptophyl-tyrosyl-methioninium (Trp-Tyr) (with M-255) cross-link spans Trp107 to Tyr229. His108 (proton acceptor) is an active-site residue. The segment at residues Tyr229 to Met255 is a cross-link (tryptophyl-tyrosyl-methioninium (Tyr-Met) (with W-107)). A heme b-binding site is contributed by His270.

This sequence belongs to the peroxidase family. Peroxidase/catalase subfamily. Homodimer or homotetramer. The cofactor is heme b. Formation of the three residue Trp-Tyr-Met cross-link is important for the catalase, but not the peroxidase activity of the enzyme.

The enzyme catalyses H2O2 + AH2 = A + 2 H2O. It carries out the reaction 2 H2O2 = O2 + 2 H2O. Its function is as follows. Bifunctional enzyme with both catalase and broad-spectrum peroxidase activity. The protein is Catalase-peroxidase 2 of Legionella pneumophila subsp. pneumophila (strain Philadelphia 1 / ATCC 33152 / DSM 7513).